The primary structure comprises 126 residues: MLISFEPFKVQDEAGIQGLVFKIIMRYYSYGLPRWFSKSNDFLSKRMSMHHLKHMLLINSNLVLSGLLLFIDVYRAATYSIFTMIRSLKRIFVDPFGIELLGLRDLRPTKGKLVERRQQHLTKIKN.

Residues 55-77 form a helical membrane-spanning segment; sequence MLLINSNLVLSGLLLFIDVYRAA.

Its subcellular location is the membrane. This is an uncharacterized protein from Dictyostelium discoideum (Social amoeba).